The sequence spans 430 residues: Aspartate aminotransferase, mitochondrial (430 aa).

A mitochondrion-targeting transit peptide spans 1 to 29 (MALLHSARVLSGVASAFHPGLAAAASARA). Residue Thr-48 is modified to Phosphothreonine. An N6-acetyllysine modification is found at Lys-59. A substrate-binding site is contributed by Gly-65. Lys-73 carries the N6-acetyllysine; alternate modification. N6-succinyllysine; alternate is present on Lys-73. At Lys-82 the chain carries N6-acetyllysine. Lys-90 is subject to N6-acetyllysine; alternate. At Lys-90 the chain carries N6-succinyllysine; alternate. At Tyr-96 the chain carries 3'-nitrotyrosine; alternate. A Phosphotyrosine; alternate modification is found at Tyr-96. Lys-122 is subject to N6-acetyllysine; alternate. Lys-122 carries the N6-succinyllysine; alternate modification. Ser-143 is modified (phosphoserine). The residue at position 159 (Lys-159) is an N6-acetyllysine; alternate. Lys-159 is modified (N6-succinyllysine; alternate). Residue Trp-162 coordinates substrate. Lys-185 is modified (N6-acetyllysine; alternate). Lys-185 carries the post-translational modification N6-succinyllysine; alternate. A substrate-binding site is contributed by Asn-215. N6-succinyllysine is present on Lys-227. Residue Lys-234 is modified to N6-acetyllysine. Lys-279 and Lys-296 each carry N6-acetyllysine; alternate. An N6-(pyridoxal phosphate)lysine; alternate modification is found at Lys-279. Lys-296 bears the N6-succinyllysine; alternate mark. Lys-302 is modified (N6-acetyllysine). Lys-309 carries the N6-acetyllysine; alternate modification. Lys-309 carries the N6-succinyllysine; alternate modification. An Asymmetric dimethylarginine modification is found at Arg-313. Lys-338 carries the N6-acetyllysine; alternate modification. Lys-338 carries the N6-succinyllysine; alternate modification. Lys-345 is modified (N6-acetyllysine). At Lys-363 the chain carries N6-acetyllysine; alternate. Lys-363 is modified (N6-succinyllysine; alternate). Lys-364 and Lys-387 each carry N6-acetyllysine. An N6-acetyllysine; alternate mark is found at Lys-396 and Lys-404. N6-succinyllysine; alternate is present on residues Lys-396 and Lys-404. Arg-407 contributes to the substrate binding site.

This sequence belongs to the class-I pyridoxal-phosphate-dependent aminotransferase family. Homodimer. Pyridoxal 5'-phosphate is required as a cofactor.

Its subcellular location is the mitochondrion matrix. The protein resides in the cell membrane. It catalyses the reaction L-aspartate + 2-oxoglutarate = oxaloacetate + L-glutamate. It carries out the reaction L-kynurenine + 2-oxoglutarate = kynurenate + L-glutamate + H2O. In terms of biological role, catalyzes the irreversible transamination of the L-tryptophan metabolite L-kynurenine to form kynurenic acid (KA). As a member of the malate-aspartate shuttle, it has a key role in the intracellular NAD(H) redox balance. Is important for metabolite exchange between mitochondria and cytosol, and for amino acid metabolism. Facilitates cellular uptake of long-chain free fatty acids. The protein is Aspartate aminotransferase, mitochondrial (GOT2) of Oryctolagus cuniculus (Rabbit).